The following is a 277-amino-acid chain: Tryptophan synthase alpha chain (277 aa).

Residues Glu-59 and Asp-70 each act as proton acceptor in the active site.

It belongs to the TrpA family. In terms of assembly, tetramer of two alpha and two beta chains.

The enzyme catalyses (1S,2R)-1-C-(indol-3-yl)glycerol 3-phosphate + L-serine = D-glyceraldehyde 3-phosphate + L-tryptophan + H2O. It functions in the pathway amino-acid biosynthesis; L-tryptophan biosynthesis; L-tryptophan from chorismate: step 5/5. The alpha subunit is responsible for the aldol cleavage of indoleglycerol phosphate to indole and glyceraldehyde 3-phosphate. The chain is Tryptophan synthase alpha chain from Streptomyces avermitilis (strain ATCC 31267 / DSM 46492 / JCM 5070 / NBRC 14893 / NCIMB 12804 / NRRL 8165 / MA-4680).